The primary structure comprises 39 residues: Conotoxin Cl14.5 (39 aa).

Positions 1–16 (PVNEAGVERLFRALVG) are excised as a propeptide. Proline 38 bears the Proline amide mark.

Post-translationally, contains 2 disulfide bonds. Expressed by the venom duct.

The protein localises to the secreted. This chain is Conotoxin Cl14.5, found in Californiconus californicus (California cone).